We begin with the raw amino-acid sequence, 741 residues long: Transketolase, chloroplastic (741 aa).

The span at 1–19 (MAASSSLSTLSHHQTLLSH) shows a compositional bias: low complexity. Residues 1-33 (MAASSSLSTLSHHQTLLSHPKTHLPTTPASSLL) form a disordered region. A chloroplast-targeting transit peptide spans 1–66 (MAASSSLSTL…VGSASAVVRA (66 aa)). Polar residues predominate over residues 24-33 (LPTTPASSLL). H103 contacts substrate. Thiamine diphosphate-binding positions include H143 and 192-194 (GPL). Residue D233 participates in Mg(2+) binding. Residues G234 and N263 each coordinate thiamine diphosphate. Residues N263 and I265 each coordinate Mg(2+). The substrate site is built by H340, R434, and S461. Thiamine diphosphate is bound at residue H340. Residues E488 and F515 each coordinate thiamine diphosphate. E488 serves as the catalytic Proton donor. Substrate-binding residues include H539, D547, and R598.

The protein belongs to the transketolase family. As to quaternary structure, homodimer. The cofactor is Mg(2+). Ca(2+) is required as a cofactor. Requires Mn(2+) as cofactor. It depends on Co(2+) as a cofactor. Thiamine diphosphate serves as cofactor.

Its subcellular location is the plastid. It is found in the chloroplast thylakoid membrane. It catalyses the reaction D-sedoheptulose 7-phosphate + D-glyceraldehyde 3-phosphate = aldehydo-D-ribose 5-phosphate + D-xylulose 5-phosphate. It participates in carbohydrate biosynthesis; Calvin cycle. Its function is as follows. Catalyzes the reversible transfer of a two-carbon ketol group from fructose-6-phosphate or sedoheptulose-7-phosphate to glyceraldehyde-3-phosphate to yield xylulose-5-phosphate and erythrose-4-phosphate or ribose-5-phosphate, respectively. This is Transketolase, chloroplastic from Spinacia oleracea (Spinach).